The following is a 307-amino-acid chain: tRNA dimethylallyltransferase (307 aa).

An ATP-binding site is contributed by 9–16 (GPTAVGKT). Position 11-16 (11-16 (TAVGKT)) interacts with substrate. The interval 34–37 (DSMQ) is interaction with substrate tRNA.

It belongs to the IPP transferase family. Monomer. Mg(2+) is required as a cofactor.

It catalyses the reaction adenosine(37) in tRNA + dimethylallyl diphosphate = N(6)-dimethylallyladenosine(37) in tRNA + diphosphate. Its function is as follows. Catalyzes the transfer of a dimethylallyl group onto the adenine at position 37 in tRNAs that read codons beginning with uridine, leading to the formation of N6-(dimethylallyl)adenosine (i(6)A). The chain is tRNA dimethylallyltransferase from Limosilactobacillus reuteri (strain DSM 20016) (Lactobacillus reuteri).